We begin with the raw amino-acid sequence, 525 residues long: MMGKGFLDCESLVALQEMALHPIDLTASGCLSEERIQKNSLSAEGFTYSYATERVDDRCLEALQGLTEERELIKQMECMQQGAIMNRIEGFQSESRPVLHTATRAWVRDQDLHEEAAAIARHSKEEALRLAEFLYIARAKFSTLVQMGIGGSELGPKAMYFAMQGSCPSDKRIFFVSNIDPDNAAEVLREIDLEQTLVVVVSKSGTTLEPAANEELFRQAYQNKGLSIAEHFVAVTSQGSPMDDKSRYLEVFHLWDSIGGRFSATSMVGGVVLGFAFGYEAFIEFLQGAAAIDAHALTPKMRENLPLLSAMLGVWNRNLLGYPTTAVIPYSTGLKYFTAHLQQCGMESNGKSISREGKEISFRTSPIIWGDVGTNCQHSFFQSLHQGTDIVPVEFIGFLHNQRGLDCVLSGSSSSQKLFANLVAQSLALAQGRDNANSNKRFKGNRPSSILVAQQLSPRIAGSLLAFYEHKFAFQGFCWGINSFDQEGVSLGKELATQIIGIMSGNAPVEFSEARGMLRLFNVLT.

Glu347 (proton donor) is an active-site residue. Active-site residues include His378 and Lys493.

This sequence belongs to the GPI family.

The protein resides in the cytoplasm. It carries out the reaction alpha-D-glucose 6-phosphate = beta-D-fructose 6-phosphate. It functions in the pathway carbohydrate biosynthesis; gluconeogenesis. Its pathway is carbohydrate degradation; glycolysis; D-glyceraldehyde 3-phosphate and glycerone phosphate from D-glucose: step 2/4. Catalyzes the reversible isomerization of glucose-6-phosphate to fructose-6-phosphate. The protein is Glucose-6-phosphate isomerase of Chlamydia trachomatis serovar D (strain ATCC VR-885 / DSM 19411 / UW-3/Cx).